The primary structure comprises 153 residues: Ribosome maturation factor RimP (153 aa).

The protein belongs to the RimP family.

It localises to the cytoplasm. In terms of biological role, required for maturation of 30S ribosomal subunits. The polypeptide is Ribosome maturation factor RimP (Clostridium botulinum (strain Loch Maree / Type A3)).